Here is a 347-residue protein sequence, read N- to C-terminus: UDP-3-O-acylglucosamine N-acyltransferase (347 aa).

Catalysis depends on His-241, which acts as the Proton acceptor.

The protein belongs to the transferase hexapeptide repeat family. LpxD subfamily. Homotrimer.

The enzyme catalyses a UDP-3-O-[(3R)-3-hydroxyacyl]-alpha-D-glucosamine + a (3R)-hydroxyacyl-[ACP] = a UDP-2-N,3-O-bis[(3R)-3-hydroxyacyl]-alpha-D-glucosamine + holo-[ACP] + H(+). It functions in the pathway bacterial outer membrane biogenesis; LPS lipid A biosynthesis. In terms of biological role, catalyzes the N-acylation of UDP-3-O-acylglucosamine using 3-hydroxyacyl-ACP as the acyl donor. Is involved in the biosynthesis of lipid A, a phosphorylated glycolipid that anchors the lipopolysaccharide to the outer membrane of the cell. This Nitrosococcus oceani (strain ATCC 19707 / BCRC 17464 / JCM 30415 / NCIMB 11848 / C-107) protein is UDP-3-O-acylglucosamine N-acyltransferase.